We begin with the raw amino-acid sequence, 116 residues long: Iron-sulfur cluster insertion protein ErpA (116 aa).

Cys-44, Cys-108, and Cys-110 together coordinate iron-sulfur cluster.

It belongs to the HesB/IscA family. In terms of assembly, homodimer. It depends on iron-sulfur cluster as a cofactor.

Functionally, required for insertion of 4Fe-4S clusters for at least IspG. This chain is Iron-sulfur cluster insertion protein ErpA, found in Nitrosococcus oceani (strain ATCC 19707 / BCRC 17464 / JCM 30415 / NCIMB 11848 / C-107).